A 104-amino-acid polypeptide reads, in one-letter code: Membrane magnesium transporter (104 aa).

The Cytoplasmic portion of the chain corresponds to 1-2 (MN). Residues 3-23 (LGFLVGVFGVLILSHAAYSTI) traverse the membrane as a helical segment. Topologically, residues 24-40 (QYRGLLKIMEEEFSRPP) are lumenal. Residues 41-61 (INVILELIIGLALCMWAALTF) form a helical membrane-spanning segment. Over 62–104 (PGKFLSIHPDSDENRAVFLPDNSDFMIFNHRGRLFPPQIDMKF) the chain is Cytoplasmic.

The protein belongs to the membrane magnesium transporter (TC 1.A.67) family. Component of the ER membrane protein complex (EMC).

It is found in the endoplasmic reticulum membrane. The protein localises to the golgi apparatus membrane. Its subcellular location is the early endosome membrane. Functionally, mediates Mg(2+) transport. This Arabidopsis thaliana (Mouse-ear cress) protein is Membrane magnesium transporter.